Consider the following 374-residue polypeptide: DNA replication and repair protein RecF (374 aa).

34–41 contributes to the ATP binding site; the sequence is GDNGAGKT.

The protein belongs to the RecF family.

Its subcellular location is the cytoplasm. In terms of biological role, the RecF protein is involved in DNA metabolism; it is required for DNA replication and normal SOS inducibility. RecF binds preferentially to single-stranded, linear DNA. It also seems to bind ATP. The polypeptide is DNA replication and repair protein RecF (Rhizobium leguminosarum bv. trifolii (strain WSM2304)).